Here is a 273-residue protein sequence, read N- to C-terminus: Multivesicular body subunit 12A (273 aa).

The MABP domain occupies 9–151 (GMPLAGLAWS…GFAIWCRKAK (143 aa)). T130 carries the post-translational modification Phosphothreonine. The segment at 154–186 (RPVPKPRALSRDVRDLSLDSPGQPSKGGFPERT) is disordered. The SH3-binding motif lies at 155–160 (PVPKPR). S163, S170, S195, and S202 each carry phosphoserine. The segment at 192–273 (SRASTLRRND…AAARLPPSVS (82 aa)) is interaction with TSG101, VPS37B and VPS28. A Phosphotyrosine modification is found at Y204. S207 is subject to Phosphoserine. Residues 215–265 (MDGVPFTLHPRFEGKSCGPLAFSAFADLTIKSLADIEAEYNYGFVVEKTAA) form the UMA domain.

This sequence belongs to the MVB12 family. In terms of assembly, component of the ESCRT-I complex (endosomal sorting complex required for transport I) which consists of TSG101, VPS28, a VPS37 protein (VPS37A to -D) and MVB12A or MVB12B in a 1:1:1:1 stoichiometry. Interacts with CD2AP and CIN85/SH3KBP1. Interacts with CD2AP (via one of the SH3 domains). Interacts with TSG101; the association appears to be mediated by the TSG101-VPS37 binary subcomplex. Interacts with VPS28. Interacts with VPS37B; the association appears to be mediated by the TSG101-VPS37 binary subcomplex. Interacts with VPS37C; the association appears to be mediated by the TSG101-VPS37 binary subcomplex. Interacts with VPS37D; the association appears to be mediated by the TSG101-VPS37 binary subcomplex. Interacts with CEP55. Post-translationally, phosphorylated on Tyr-204 upon EGF stimulation. Phosphorylation is required for interaction with CD2AP and CIN85/SH3KBP1.

It is found in the cytoplasm. The protein localises to the cytoskeleton. The protein resides in the nucleus. It localises to the endosome. Its subcellular location is the microtubule organizing center. It is found in the centrosome. The protein localises to the late endosome membrane. In terms of biological role, component of the ESCRT-I complex, a regulator of vesicular trafficking process. Required for the sorting of endocytic ubiquitinated cargos into multivesicular bodies. May be involved in the ligand-mediated internalization and down-regulation of EGF receptor. This is Multivesicular body subunit 12A (MVB12A) from Bos taurus (Bovine).